The following is a 237-amino-acid chain: Protein XpsM (237 aa).

The interval 1-21 (MPAATWTASPSPPNWPVPMPR) is disordered. Over residues 10 to 21 (PSPPNWPVPMPR) the composition is skewed to pro residues.

The sequence is that of Protein XpsM (xpsM) from Xanthomonas campestris pv. campestris (strain ATCC 33913 / DSM 3586 / NCPPB 528 / LMG 568 / P 25).